The following is a 463-amino-acid chain: Elongation factor 1-alpha 1 (463 aa).

Residues 5–242 enclose the tr-type G domain; the sequence is KIHINIVVIG…DAILPPARPT (238 aa). Residues 14-21 form a G1 region; it reads GHVDSGKS. 14–21 lines the GTP pocket; the sequence is GHVDSGKS. Positions 70–74 are G2; that stretch reads GITID. The G3 stretch occupies residues 91 to 94; sequence DAPG. Residues 91–95 and 153–156 each bind GTP; these read DAPGH and NKMD. The tract at residues 153–156 is G4; that stretch reads NKMD. Residues 194-196 form a G5 region; the sequence is SGW. A 5-glutamyl glycerylphosphorylethanolamine mark is found at E301 and E374.

This sequence belongs to the TRAFAC class translation factor GTPase superfamily. Classic translation factor GTPase family. EF-Tu/EF-1A subfamily.

Its subcellular location is the cytoplasm. In terms of biological role, this protein promotes the GTP-dependent binding of aminoacyl-tRNA to the A-site of ribosomes during protein biosynthesis. In Drosophila melanogaster (Fruit fly), this protein is Elongation factor 1-alpha 1.